A 631-amino-acid chain; its full sequence is MLRGGCKASEKRRHLSESLSWQQDQALSSSIYLLRQIGPTGFLLKEEEPEKGDFRVLLGNPHECSCPTFLKRGELCKHICWVLLKKFKLPRNHESAFQLGLTEGEINDLLRGIHQVQAPQLRASDETAQVEEDGYLKQKDINAGDICPICQEVLLEKKLPVTFCRFGCGNNVHIKCMRILANYQDTGSDSSVLRCPLCREEFAPLKVILEEFKNSNKLITISEKERLDKHLGIPCNNCNQLPIEGRCYKCTECVEYHLCQECFDSCCHSSHAFASREKRNQRWRSVEKRSEVMKYLNTENEGEAKPGCFQEKQGQFYTPKHVVKSLPLLMITKKSKLLAPGYQCRLCLKSFSFGQYTRLLPCTHKFHRKCIDNWLLHKCNSCPIDRQVIYNPLIWKGIATDGQAHQLASSKDIACLSKQQEPKLFIPGTGLVLKGKRMGVLPSIPQYNSKVLTTLQNPSDNYQNITMDDLCSVKLDNSNSRKLVFGYKISKQFPTYLKNPTTGQTPSQTFLPSLPHKNIICLTGRESPHIYEKDHIGQSQKTSRGYEHINYNTRKSLGSRLRQHKRSSALSSEDLNLTINLGTTKLSLSKRQNNSMGKVRQKLGHPPRRPAYPPLQTQNAALSLIMQGIQL.

An SWIM-type zinc finger spans residues 54-87 (FRVLLGNPHECSCPTFLKRGELCKHICWVLLKKF). A UBE2D1-binding region spans residues 139-348 (KDINAGDICP…APGYQCRLCL (210 aa)). The RING-type 1 zinc finger occupies 147 to 199 (CPICQEVLLEKKLPVTFCRFGCGNNVHIKCMRILANYQDTGSDSSVLRCPLCR). Residues 230–281 (HLGIPCNNCNQLPIEGRCYKCTECVEYHLCQECFDSCCHSSHAFASREKRNQ) form a ZZ-type zinc finger. Zn(2+) is bound by residues cysteine 235, cysteine 238, cysteine 250, cysteine 253, cysteine 259, cysteine 262, histidine 268, and histidine 271. The segment at 344 to 386 (CRLCLKSFSFGQYTRLLPCTHKFHRKCIDNWLLHKCNSCPIDR) adopts an RING-type 2 zinc-finger fold. A disordered region spans residues 589-614 (SKRQNNSMGKVRQKLGHPPRRPAYPP). Positions 599 to 608 (VRQKLGHPPR) are enriched in basic residues.

In terms of assembly, dimer. Interacts with UBE2D1. Polyubiquitinated. Polyubiquitination is followed by degradation via the proteasome. Expressed only in testis.

The enzyme catalyses S-ubiquitinyl-[E2 ubiquitin-conjugating enzyme]-L-cysteine + [acceptor protein]-L-lysine = [E2 ubiquitin-conjugating enzyme]-L-cysteine + N(6)-ubiquitinyl-[acceptor protein]-L-lysine.. In terms of biological role, E3 ubiquitin-protein ligase involved in the regulation of Fas-, DR3- and DR4-mediated apoptosis. Functions in conjunction with the UBE2D1, UBE2D3 and UBE2E1 E2 ubiquitin-conjugating enzymes. The chain is E3 ubiquitin-protein ligase Zswim2 (Zswim2) from Mus musculus (Mouse).